Consider the following 615-residue polypeptide: DNA mismatch repair protein MutL (615 aa).

Positions 362-397 (HFAEPAVREPVAPRYSPAPASGSRPAAPWPNAQPGY) are disordered. Over residues 373–387 (APRYSPAPASGSRPA) the composition is skewed to low complexity.

It belongs to the DNA mismatch repair MutL/HexB family.

This protein is involved in the repair of mismatches in DNA. It is required for dam-dependent methyl-directed DNA mismatch repair. May act as a 'molecular matchmaker', a protein that promotes the formation of a stable complex between two or more DNA-binding proteins in an ATP-dependent manner without itself being part of a final effector complex. The protein is DNA mismatch repair protein MutL of Escherichia coli O81 (strain ED1a).